A 163-amino-acid polypeptide reads, in one-letter code: Endoribonuclease YbeY (163 aa).

Residues H119, H123, and H129 each coordinate Zn(2+).

It belongs to the endoribonuclease YbeY family. The cofactor is Zn(2+).

The protein localises to the cytoplasm. Its function is as follows. Single strand-specific metallo-endoribonuclease involved in late-stage 70S ribosome quality control and in maturation of the 3' terminus of the 16S rRNA. The sequence is that of Endoribonuclease YbeY from Actinobacillus pleuropneumoniae serotype 5b (strain L20).